Consider the following 155-residue polypeptide: 6,7-dimethyl-8-ribityllumazine synthase (155 aa).

5-amino-6-(D-ribitylamino)uracil contacts are provided by residues phenylalanine 22, 57–59 (AYE), and 81–83 (SVI). 86–87 (GT) is a (2S)-2-hydroxy-3-oxobutyl phosphate binding site. The active-site Proton donor is histidine 88. Phenylalanine 113 provides a ligand contact to 5-amino-6-(D-ribitylamino)uracil. A (2S)-2-hydroxy-3-oxobutyl phosphate-binding site is contributed by arginine 127.

It belongs to the DMRL synthase family. In terms of assembly, forms an icosahedral capsid composed of 60 subunits, arranged as a dodecamer of pentamers.

The catalysed reaction is (2S)-2-hydroxy-3-oxobutyl phosphate + 5-amino-6-(D-ribitylamino)uracil = 6,7-dimethyl-8-(1-D-ribityl)lumazine + phosphate + 2 H2O + H(+). The protein operates within cofactor biosynthesis; riboflavin biosynthesis; riboflavin from 2-hydroxy-3-oxobutyl phosphate and 5-amino-6-(D-ribitylamino)uracil: step 1/2. Catalyzes the formation of 6,7-dimethyl-8-ribityllumazine by condensation of 5-amino-6-(D-ribitylamino)uracil with 3,4-dihydroxy-2-butanone 4-phosphate. This is the penultimate step in the biosynthesis of riboflavin. This chain is 6,7-dimethyl-8-ribityllumazine synthase, found in Photobacterium phosphoreum.